The sequence spans 116 residues: Cell cycle protein GpsB (116 aa).

The stretch at 32–69 forms a coiled coil; that stretch reads LDDVIKDYETYSALVKELREENSRLKQELSKRMQEAPN. The tract at residues 57–78 is disordered; it reads KQELSKRMQEAPNSTASQVHQS. A compositionally biased stretch (polar residues) spans 67 to 78; sequence APNSTASQVHQS.

This sequence belongs to the GpsB family. Forms polymers through the coiled coil domains. Interacts with PBP1, MreC and EzrA.

It localises to the cytoplasm. Its function is as follows. Divisome component that associates with the complex late in its assembly, after the Z-ring is formed, and is dependent on DivIC and PBP2B for its recruitment to the divisome. Together with EzrA, is a key component of the system that regulates PBP1 localization during cell cycle progression. Its main role could be the removal of PBP1 from the cell pole after pole maturation is completed. Also contributes to the recruitment of PBP1 to the division complex. Not essential for septum formation. This chain is Cell cycle protein GpsB, found in Streptococcus gordonii (strain Challis / ATCC 35105 / BCRC 15272 / CH1 / DL1 / V288).